Here is a 273-residue protein sequence, read N- to C-terminus: Mediator of RNA polymerase II transcription subunit 18 (273 aa).

A compositionally biased stretch (low complexity) spans 90–106 (GAQSSAASSGDPDAPMS). A disordered region spans residues 90–114 (GAQSSAASSGDPDAPMSGTDTGTNF).

It belongs to the Mediator complex subunit 18 family. As to quaternary structure, component of the Mediator complex.

The protein resides in the nucleus. Functionally, component of the Mediator complex, a coactivator involved in the regulated transcription of nearly all RNA polymerase II-dependent genes. Mediator functions as a bridge to convey information from gene-specific regulatory proteins to the basal RNA polymerase II transcription machinery. Mediator is recruited to promoters by direct interactions with regulatory proteins and serves as a scaffold for the assembly of a functional preinitiation complex with RNA polymerase II and the general transcription factors. The chain is Mediator of RNA polymerase II transcription subunit 18 (srb5) from Aspergillus oryzae (strain ATCC 42149 / RIB 40) (Yellow koji mold).